We begin with the raw amino-acid sequence, 94 residues long: RNA-binding protein Hfq (94 aa).

A Sm domain is found at 9–68 (DPFLNALRRERVPVSIYLVNGIKLQGQVESFDQFVILLKNTVSQMVYKHAISTVVPARPF). A disordered region spans residues 70–94 (VSAHHSSPAPTPAGGFNGQNDETSE).

Belongs to the Hfq family. Homohexamer.

Its function is as follows. RNA chaperone that binds small regulatory RNA (sRNAs) and mRNAs to facilitate mRNA translational regulation in response to envelope stress, environmental stress and changes in metabolite concentrations. Also binds with high specificity to tRNAs. The protein is RNA-binding protein Hfq of Shewanella woodyi (strain ATCC 51908 / MS32).